A 221-amino-acid polypeptide reads, in one-letter code: UPF0502 protein PSPA7_1674 (221 aa).

This sequence belongs to the UPF0502 family.

This Pseudomonas paraeruginosa (strain DSM 24068 / PA7) (Pseudomonas aeruginosa (strain PA7)) protein is UPF0502 protein PSPA7_1674.